The chain runs to 317 residues: uncharacterized protein (317 aa).

The next 6 membrane-spanning stretches (helical) occupy residues 14 to 34, 72 to 92, 119 to 139, 196 to 216, 230 to 250, and 291 to 307; these read IPLL…ATVS, LIGF…YGAV, LLFG…LDIA, TLLN…FCKQ, LFLG…ADVL, and SNML…WYTY. 3 Solcar repeats span residues 18 to 103, 113 to 217, and 224 to 313; these read SNDL…LKQR, LENH…CKQK, and LTAF…VSKM.

Belongs to the mitochondrial carrier (TC 2.A.29) family.

It is found in the mitochondrion inner membrane. This is an uncharacterized protein from Schizosaccharomyces pombe (strain 972 / ATCC 24843) (Fission yeast).